A 406-amino-acid polypeptide reads, in one-letter code: Cysteine desulfurase (406 aa).

An N6-(pyridoxal phosphate)lysine modification is found at K226. The active-site Cysteine persulfide intermediate is C364.

Belongs to the class-V pyridoxal-phosphate-dependent aminotransferase family. Csd subfamily. Homodimer. Interacts with SufE and the SufBCD complex composed of SufB, SufC and SufD. The interaction with SufE is required to mediate the direct transfer of the sulfur atom from the S-sulfanylcysteine. It depends on pyridoxal 5'-phosphate as a cofactor.

The protein localises to the cytoplasm. The catalysed reaction is (sulfur carrier)-H + L-cysteine = (sulfur carrier)-SH + L-alanine. It carries out the reaction L-selenocysteine + AH2 = hydrogenselenide + L-alanine + A + H(+). The protein operates within cofactor biosynthesis; iron-sulfur cluster biosynthesis. Functionally, cysteine desulfurases mobilize the sulfur from L-cysteine to yield L-alanine, an essential step in sulfur metabolism for biosynthesis of a variety of sulfur-containing biomolecules. Component of the suf operon, which is activated and required under specific conditions such as oxidative stress and iron limitation. Acts as a potent selenocysteine lyase in vitro, that mobilizes selenium from L-selenocysteine. Selenocysteine lyase activity is however unsure in vivo. This chain is Cysteine desulfurase, found in Escherichia coli O17:K52:H18 (strain UMN026 / ExPEC).